Reading from the N-terminus, the 456-residue chain is Bifunctional protein GlmU (456 aa).

Residues 1 to 229 (MLNSAMSVVI…ISETDGVNNR (229 aa)) are pyrophosphorylase. UDP-N-acetyl-alpha-D-glucosamine-binding positions include 11 to 14 (LAAG), Lys-25, Gln-76, 81 to 82 (GT), 103 to 105 (YGD), Gly-140, Glu-154, Asn-169, and Asn-227. Residue Asp-105 participates in Mg(2+) binding. Position 227 (Asn-227) interacts with Mg(2+). The linker stretch occupies residues 230 to 250 (LQLSRLERIYQAEQAEKLLLS). The N-acetyltransferase stretch occupies residues 251–456 (GVMLRDPARF…QGWQRPVKKK (206 aa)). UDP-N-acetyl-alpha-D-glucosamine-binding residues include Arg-333 and Lys-351. His-363 serves as the catalytic Proton acceptor. 2 residues coordinate UDP-N-acetyl-alpha-D-glucosamine: Tyr-366 and Asn-377. Acetyl-CoA-binding positions include Ala-380, 386-387 (NY), Ser-405, Ala-423, and Arg-440.

This sequence in the N-terminal section; belongs to the N-acetylglucosamine-1-phosphate uridyltransferase family. In the C-terminal section; belongs to the transferase hexapeptide repeat family. In terms of assembly, homotrimer. It depends on Mg(2+) as a cofactor.

The protein resides in the cytoplasm. It carries out the reaction alpha-D-glucosamine 1-phosphate + acetyl-CoA = N-acetyl-alpha-D-glucosamine 1-phosphate + CoA + H(+). It catalyses the reaction N-acetyl-alpha-D-glucosamine 1-phosphate + UTP + H(+) = UDP-N-acetyl-alpha-D-glucosamine + diphosphate. It participates in nucleotide-sugar biosynthesis; UDP-N-acetyl-alpha-D-glucosamine biosynthesis; N-acetyl-alpha-D-glucosamine 1-phosphate from alpha-D-glucosamine 6-phosphate (route II): step 2/2. The protein operates within nucleotide-sugar biosynthesis; UDP-N-acetyl-alpha-D-glucosamine biosynthesis; UDP-N-acetyl-alpha-D-glucosamine from N-acetyl-alpha-D-glucosamine 1-phosphate: step 1/1. It functions in the pathway bacterial outer membrane biogenesis; LPS lipid A biosynthesis. In terms of biological role, catalyzes the last two sequential reactions in the de novo biosynthetic pathway for UDP-N-acetylglucosamine (UDP-GlcNAc). The C-terminal domain catalyzes the transfer of acetyl group from acetyl coenzyme A to glucosamine-1-phosphate (GlcN-1-P) to produce N-acetylglucosamine-1-phosphate (GlcNAc-1-P), which is converted into UDP-GlcNAc by the transfer of uridine 5-monophosphate (from uridine 5-triphosphate), a reaction catalyzed by the N-terminal domain. This chain is Bifunctional protein GlmU, found in Salmonella heidelberg (strain SL476).